A 271-amino-acid polypeptide reads, in one-letter code: HTH-type transcriptional repressor AllR (271 aa).

The HTH iclR-type domain maps to 21–83; it reads AQALERGIAI…SQLGWWHIGL (63 aa). The H-T-H motif DNA-binding region spans 43–62; that stretch reads VSDISLNLDLPLSTTFRLLK. The IclR-ED domain occupies 98–267; sequence VLSVAGPFMR…ARDISTALGL (170 aa). Glyoxylate-binding positions include 154–156, Asp-207, Cys-217, and 234–236; these read SGA and SIS.

Negative regulator of allantoin and glyoxylate utilization operons. Binds to the gcl promoter and to the allS-allA intergenic region. The sequence is that of HTH-type transcriptional repressor AllR (allR) from Escherichia coli O6:H1 (strain CFT073 / ATCC 700928 / UPEC).